The chain runs to 875 residues: Kelch-like protein 29 (875 aa).

The segment covering 113–126 has biased composition (polar residues); it reads IRWGQTPVNQSTPW. Disordered stretches follow at residues 113–145 and 240–291; these read IRWG…PGTG and GVGQ…DSAH. Residues 131–140 are compositionally biased toward basic and acidic residues; sequence PPSKQMRESD. Low complexity predominate over residues 270 to 280; it reads PSAALPSSVPA. One can recognise a BTB domain in the interval 329-401; that stretch reads TDLKIVVEGR…VYTGSLVIDS (73 aa). Kelch repeat units follow at residues 585–635, 637–683, 684–730, 732–778, 779–821, and 822–870; these read VIVL…VSAG, NIYL…VYDG, KIYT…VCGG, IYVF…TLNG, FVFI…VLDG, and KIYA…VIKK.

The sequence is that of Kelch-like protein 29 (Klhl29) from Mus musculus (Mouse).